Here is a 215-residue protein sequence, read N- to C-terminus: MKAISRVLIAMISALAAAVAGLFVSAGTSHAGLDNELSLVDGQDRTLTVQQWDTFLNGVFPLDRNRLTREWFHSGRAKYIVAGPGADEFEGTLELGYQIGFPWSLGVGINFSYTTPNILIDDGDITGPPFGLESVITPNLFPGVSISADLGNGPGIQEVATFSVDVSGPAGGVAVSNAHGTVTGAAGGVLLRPFARLIASTGDSVTTYGEPWNMN.

A signal peptide spans 1-31; the sequence is MKAISRVLIAMISALAAAVAGLFVSAGTSHA.

It belongs to the mycobacterial porin (TC 1.B.24) family. In terms of assembly, octamers. Probably forms a goblet with the wide end on the exterior of the outer membrane and a central channel. It is not known if mixed oligomers of MspC with other Msp subunits form in vivo.

The protein localises to the cell outer membrane. Its subcellular location is the secreted. The protein resides in the cell wall. In terms of biological role, a constitutively expressed secondary porin, forms a water-filled channel which favors the permeation of cations and less efficiently phosphate. There are about 2400 porins in wild-type, 800 in an mspA deletion and 150 in a double mspA-mspC deletion. The sequence is that of Porin MspC (mspC) from Mycolicibacterium smegmatis (strain ATCC 700084 / mc(2)155) (Mycobacterium smegmatis).